Here is a 582-residue protein sequence, read N- to C-terminus: MPQIGLVSAVNLRVQGNSAYLWSSRSSLGTDSQDGCSQRNSLCFGGSDSMSHRLKIRNPHSITRRLAKDFRPLKVVCIDYPRPELDNTVNYLEAAFLSSSFRSSPRPTKPLEIVIAGAGLGGLSTAKYLADAGHKPILLEARDVLGGKVAAWKDDDGDWYETGLHIFFGAYPNMQNLFGELGINDRLQWKEHSMIFAMPNKPGEFSRFDFPEALPAPLNGILAILKNNEMLTWPEKVKFAIGLLPAMLGGQSYVEAQDGISVKDWMRKQGVPDRVTDEVFIAMSKALNFINPDELSMQCILIALNRFLQEKHGSKMAFLDGNPPERLCMPIVEHIESKGGQVRLNSRIKKIELNEDGSVKCFILNDGSTIEGDAFVFATPVDIFKLLLPEDWKEIPYFQKLEKLVGVPVINVHIWFDRKLKNTSDNLLFSRSPLLSVYADMSVTCKEYYDPNKSMLELVFAPAEEWVSRSDSEIIDATMKELAKLFPDEISADQSKAKILKYHVVKTPRSVYKTVPGCEPCRLLQRSPVEGFYLAGDYTKQKYLASMEGAVLSGKLCAQAIVQDYELLVGRSQRKLAETSVV.

A chloroplast and chromoplast-targeting transit peptide spans 1–110; that stretch reads MPQIGLVSAV…FRSSPRPTKP (110 aa). Residues 140–141, lysine 148, 165–166, and tyrosine 171 contribute to the FAD site; these read EA and HI. Residue arginine 306 coordinates substrate. Residues isoleucine 348 and aspartate 537 each contribute to the FAD site. Alanine 545 is a substrate binding site. Methionine 547 is a binding site for FAD.

It belongs to the carotenoid/retinoid oxidoreductase family. Homotetramer. FAD is required as a cofactor.

The protein resides in the plastid. It localises to the chloroplast. Its subcellular location is the chromoplast. The protein localises to the membrane. The enzyme catalyses 2 a plastoquinone + 15-cis-phytoene = 9,9',15-tri-cis-zeta-carotene + 2 a plastoquinol. It participates in carotenoid biosynthesis; lycopene biosynthesis. Inhibited by the herbicides metflurazon, difunone, fluridone and diflufenican. Its function is as follows. Converts phytoene into zeta-carotene via the intermediary of phytofluene by the symmetrical introduction of two double bonds at the C-11 and C-11' positions of phytoene with a concomitant isomerization of two neighboring double bonds at the C9 and C9' positions from trans to cis. In Capsicum annuum (Capsicum pepper), this protein is 15-cis-phytoene desaturase, chloroplastic/chromoplastic (PDS).